The chain runs to 480 residues: Aromatic-L-amino-acid decarboxylase (480 aa).

Methionine 1 bears the N-acetylmethionine mark. 2 repeat units span residues 58 to 115 (KDIE…TELE) and 118 to 178 (MMDW…TQAA). The interval 58–178 (KDIEKIIMPG…AASPEFTQAA (121 aa)) is 2 X approximate tandem repeats. A substrate-binding site is contributed by threonine 82. Residues alanine 148 and serine 149 each coordinate pyridoxal 5'-phosphate. Residue histidine 192 participates in substrate binding. Positions 246 and 300 each coordinate pyridoxal 5'-phosphate. Lysine 303 carries the post-translational modification N6-(pyridoxal phosphate)lysine.

The protein belongs to the group II decarboxylase family. Homodimer. Pyridoxal 5'-phosphate is required as a cofactor.

The enzyme catalyses L-dopa + H(+) = dopamine + CO2. It carries out the reaction 5-hydroxy-L-tryptophan + H(+) = serotonin + CO2. It participates in catecholamine biosynthesis; dopamine biosynthesis; dopamine from L-tyrosine: step 2/2. In terms of biological role, catalyzes the decarboxylation of L-3,4-dihydroxyphenylalanine (DOPA) to dopamine and L-5-hydroxytryptophan to serotonin. This is Aromatic-L-amino-acid decarboxylase (Ddc) from Mus musculus (Mouse).